Here is a 515-residue protein sequence, read N- to C-terminus: Putative myristoylated protein 118L (515 aa).

Glycine 2 is lipidated: N-myristoyl glycine; by host. Transmembrane regions (helical) follow at residues 188–208 (LSLA…VGGV), 214–234 (IIFP…FQWT), and 482–502 (WLLY…AFSS).

This sequence belongs to the IIV-6 118L/458R family.

Its subcellular location is the membrane. The polypeptide is Putative myristoylated protein 118L (Acheta domesticus (House cricket)).